Consider the following 351-residue polypeptide: MAETMRALRKLEAGPGATLQEVPIPTIGPRDVLVKVRAASICGTDYHIYTWDPWSAGRVKPPLTIGHELAGEVVAVGREVTACKVGDYVSAETHIVCNRCPRCHMGEYHLCENTKILGVDTDGAFAEYVAVPEQNIWVNDKDIPFELQSIQEPLGNAVHTALNGDLTARSVLITGCGPIGIMSVPVAKMAGAEIVMAMDINEYRLQLAGQLGADVLINPTKQDPVEVVRSYTRGYGADVVLEMSGNPTAIRQGLKAARNGARISLLGLPGRPLELDLAADVIMRGLVLQGITGRRMWQTWYQVRSLYRAGLAERLRPLVTHRMPLEQIDAAMELMGSGQSGKIVLVPDLKA.

C42 contacts Zn(2+). Residues T44 and H47 each act as charge relay system in the active site. 6 residues coordinate Zn(2+): H67, E68, C97, C100, C103, and C111. NAD(+)-binding positions include I179, D199, R204, 266–268, and 291–292; these read LGL and IT.

This sequence belongs to the zinc-containing alcohol dehydrogenase family. In terms of assembly, homotetramer. Zn(2+) serves as cofactor.

It is found in the cytoplasm. The enzyme catalyses L-threonine + NAD(+) = (2S)-2-amino-3-oxobutanoate + NADH + H(+). It participates in amino-acid degradation; L-threonine degradation via oxydo-reductase pathway; glycine from L-threonine: step 1/2. In terms of biological role, catalyzes the NAD(+)-dependent oxidation of L-threonine to 2-amino-3-ketobutyrate. In Symbiobacterium thermophilum (strain DSM 24528 / JCM 14929 / IAM 14863 / T), this protein is L-threonine 3-dehydrogenase.